The sequence spans 334 residues: Heat-inducible transcription repressor HrcA (334 aa).

The protein belongs to the HrcA family.

Functionally, negative regulator of class I heat shock genes (grpE-dnaK-dnaJ and groELS operons). Prevents heat-shock induction of these operons. This is Heat-inducible transcription repressor HrcA from Acidovorax ebreus (strain TPSY) (Diaphorobacter sp. (strain TPSY)).